A 479-amino-acid polypeptide reads, in one-letter code: Glutamyl-tRNA(Gln) amidotransferase subunit A (479 aa).

Catalysis depends on charge relay system residues Lys-71 and Ser-146. Ser-170 acts as the Acyl-ester intermediate in catalysis.

It belongs to the amidase family. GatA subfamily. Heterotrimer of A, B and C subunits.

The catalysed reaction is L-glutamyl-tRNA(Gln) + L-glutamine + ATP + H2O = L-glutaminyl-tRNA(Gln) + L-glutamate + ADP + phosphate + H(+). Its function is as follows. Allows the formation of correctly charged Gln-tRNA(Gln) through the transamidation of misacylated Glu-tRNA(Gln) in organisms which lack glutaminyl-tRNA synthetase. The reaction takes place in the presence of glutamine and ATP through an activated gamma-phospho-Glu-tRNA(Gln). The sequence is that of Glutamyl-tRNA(Gln) amidotransferase subunit A from Lactobacillus johnsonii (strain CNCM I-12250 / La1 / NCC 533).